A 260-amino-acid polypeptide reads, in one-letter code: Small ribosomal subunit protein uS3 (260 aa).

A KH type-2 domain is found at 39-114 (LRQYIEQKLG…QIRINVVEVQ (76 aa)). The interval 219-260 (EVAAPPPSTRDRDRDRGDRDREPRRRQQQRRRQQFEDRSNEG) is disordered. Basic and acidic residues-rich tracts occupy residues 227–243 (TRDRDRDRGDRDREPRR) and 251–260 (QQFEDRSNEG).

This sequence belongs to the universal ribosomal protein uS3 family. Part of the 30S ribosomal subunit. Forms a tight complex with proteins S10 and S14.

Its function is as follows. Binds the lower part of the 30S subunit head. Binds mRNA in the 70S ribosome, positioning it for translation. This is Small ribosomal subunit protein uS3 from Trichormus variabilis (strain ATCC 29413 / PCC 7937) (Anabaena variabilis).